The primary structure comprises 84 residues: Putative regulatory protein Hore_09800 (84 aa).

The protein belongs to the RemA family.

This is Putative regulatory protein Hore_09800 from Halothermothrix orenii (strain H 168 / OCM 544 / DSM 9562).